We begin with the raw amino-acid sequence, 3526 residues long: MNMVKRIMGRPRQEECSPQDNALGLMHLRRLFTELCHPPRHMTQKEQEEKLYMMLPVFNRVFGNAPPNTMTEKFSDLLQFTTQVSRLMVTEIRRRASNKSTEAASRAIVQFLEINQSEEASRGWMLLTTINLLASSGQKTVDCMTTMSVPSTLVKCLYLFFDLPHVPEAVGGAQNELPLAERRGLLQKVFVQILVKLCSFVSPAEELAQKDDLQLLFSAITSWCPPYNLPWRKSAGEVLMTISRHGLSVNVVKYIHEKECLSTCVQNMQQSDDLSPLEIVEMFAGLSCFLKDSSDVSQTLLDDFRIWQGYNFLCDLLLRLEQAKEAESKDALKDLVNLITSLTTYGVSELKPAGITTGAPFLLPGFAVPQPAGKGHSVRNVQAFAVLQNAFLKAKTSFLAQIILDAITNIYMADNANYFILESQHTLSQFAEKISKLPEVQNKYFEMLEFVVFSLNYIPCKELISVSILLKSSSSYHCSIIAMKTLLKFTRHDYIFKDVFREVGLLEVMVNLLHKYAALLKDPTQALNEQGDSRNNSSVEDQKHLALLVMETLTVLLQGSNTNAGIFREFGGARCAHNIVKYPQCRQHALMTIQQLVLSPNGDDDMGTLLGLMHSAPPTELQLKTDILRALLSVLRESHRSRTVFRKVGGFVYITSLLVAMERSLSCPPKNGWEKVNQNQVFELLHTVFCTLTAAMRYEPANSHFFKTEIQYEKLADAVRFLGCFSDLRKISAMNVFPSNTQPFQRLLEEDVISIESVSPTLRHCSKLFIYLYKVATDSFDSRAEQIPPCLTSESSLPSPWGTPALSRKRHAYHSVSTPPVYPPKNVADLKLHVTTSSLQSSDAVIIHPGAMLAMLDLLASVGSVTQPEHALDLQLAVANILQSLVHTERNQQVMCEAGLHARLLQRCSAALADEDHSLHPPLQRMFERLASQALEPMVLREFLRLASPLNCGAWDKKLLKQYRVHKPSSLSYEPEMRSSMITSLEGLGTDNVFSLHEDNHYRISKSLVKSAEGSTVPLTRVKCLVSMTTPHDIRLHGSSVTPAFVEFDTSLEGFGCLFLPSLAPHNAPTNNTVTTGLIDGAVVSGIGSGERFFPPPSGLSYSSWFCIEHFSSPPNNHPVRLLTVVRRANSSEQHYVCLAIVLSAKDRSLIVSTKEELLQNYVDDFSEESSFYEILPCCARFRCGELIIEGQWHHLVLVMSKGMLKNSTAALYIDGQLVNTVKLHYVHSTPGGSGSANPPVVSTVYAYIGTPPAQRQIASLVWRLGPTHFLEEVLPSSNVTTIYELGPNYVGSFQAVCMPCKDAKSEGVVPSPVSLVPEEKVSFGLYALSVSSLTVARIRKVYNKLDSKAIAKQLGISSHENATPVKLIHNSAGHLNGSARTIGAALIGYLGVRTFVPKPVATTLQYVGGAAAILGLVAMASDVEGLYAAVKALVCVVKSNPLASKEMERIKGYQLLAMLLKKKRSLLNSHILHLTFSLVGTVDSGHETSIIPNSTAFQDLLCDFEVWLHAPYELHLSLFEHFIELLTESSEASKNAKLMREFQLIPKLLLTLRDMSLSQPTIAAISNVLSFLLQGFPSSNDLLRFGQFISSTLPTFAVCEKFVVMEINNEEKLDTGTEEEFGGLVSANLILLRNRLLDILLKLIYTSKEKTSINLQACEELVKTLGFDWIMMFMEEHLHSTTVTAAMRILVVLLSNQSILIKFKEGLSGGGWLEQTDSVLTNKIGTVLGFNVGRSAGGRSTVREINRDACHFPGFPVLQSFLPKHTNVPALYFLLMALFLQQPVSELPENLQVSVPVISCRSKQGCQFDLDSIWTFIFGVPASSGTVVSSIHNVCTEAVFLLLGMLRSMLTSPWQSEEEGSWLREYPVTLMQFFRYLYHNVPDLASMWMSPDFLCALAATVFPFNIRPYSEMVTDLDDEVGSPAEEFKAFAADTGMNRSQSEYCNVGTKTYLTNHPAKKFVFDFMRVLIIDNLCLTPASKQTPLIDLLLEASPERSTRTQQKEFQTYILDSVMDHLLAADVLLGEDASLPITSGGSYQVLVNNVFYFTQRVVDKLWQGMFNKESKLLIDFIIQLIAQSKRRSQGLSLDAVYHCLNRTILYQFSRAHKTVPQQVALLDSLRVLTVNRNLILGPGNHDQEFISCLAHCLINLHVGSNVDGFGLEAEARMTTWHIMIPSDIEPDGSYSQDISEGRQLLIKAVNRVWTELIHSKKQVLEELFKVTLPVNERGHVDIATARPLIEEAALKCWQNHLAHEKKCISRGEALAPTTQSKLSRVSSGFGLSKLTGSRRNRKESGLNKHSLSTQEISQWMFTHIAVVRDLVDTQYKEYQERQQNALKYVTEEWCQIECELLRERGLWGPPIGSHLDKWMLEMTEGPCRMRKKMVRNDMFYNHYPYVPETEQETNVASEIPSKQPETPDDIPQKKPARYRRAVSYDSKEYYMRLASGNPAIVQDAIVESSEGEAAQQEPEHGEDTIAKVKGLVKPPLKRSRSAPDGGDEENQEQLQDQIAEGSSIEEEEKTDNATLLRLLEEGEKIQHMYRCARVQGLDTSEGLLLFGKEHFYVIDGFTMTATREIRDIETLPPNMHEPIIPRGARQGPSQLKRTCSIFAYEDIKEVHKRRYLLQPIAVEVFSGDGRNYLLAFQKGIRNKVYQRFLAVVPSLTDSSESVSGQRPNTSVEQGSGLLSTLVGEKSVTQRWERGEISNFQYLMHLNTLAGRSYNDLMQYPVFPWILADYDSEEVDLTNPKTFRNLAKPMGAQTDERLAQYKKRYKDWEDPNGETPAYHYGTHYSSAMIVASYLVRMEPFTQIFLRLQGGHFDLADRMFHSVREAWYSASKHNMADVKELIPEFFYLPEFLFNSNNFDLGCKQNGTKLGDVILPPWAKGDPREFIRVHREALECDYVSAHLHEWIDLIFGYKQQGPAAVEAVNVFHHLFYEGQVDIYNINDPLKETATIGFINNFGQIPKQLFKKPHPPKRVRSRLNGDNAGISVLPGSTSDKIFFHHLDNLRPSLTPVKELKEPVGQIVCTDKGILAVEQNKVLIPPTWNKTFAWGYADLSCRLGTYESDKAMTVYECLSEWGQILCAICPNPKLVITGGTSTVVCVWEMGTSKEKAKTVTLKQALLGHTDTVTCATASLAYHIIVSGSRDRTCIIWDLNKLSFLTQLRGHRAPVSALCINELTGDIVSCAGTYIHVWSINGNPIVSVNTFTGRSQQIICCCMSEMNEWDTQNVIVTGHSDGVVRFWRMEFLQVPETPAPEPAEVLEMQEDCPEAQIGQEAQDEDSSDSEADEQSISQDPKDTPSQPSSTSHRPRAASCRATAAWCTDSGSDDSRRWSDQLSLDEKDGFIFVNYSEGQTRAHLQGPLSHPHPNPIEVRNYSRLKPGYRWERQLVFRSKLTMHTAFDRKDNAHPAEVTALGISKDHSRILVGDSRGRVFSWSVSDQPGRSAADHWVKDEGGDSCSGCSVRFSLTERRHHCRNCGQLFCQKCSRFQSEIKRLKISSPVRVCQNCYYNLQHERGSEDGPRNC.

Phosphoserine occurs at positions 1942 and 2278. Residues 2285–2981 (LTGSRRNRKE…PHPPKRVRSR (697 aa)) are sufficient for localization to p62 bodies/ALIS. Disordered regions lie at residues 2403–2429 (ETNV…PARY) and 2459–2522 (SSEG…EKTD). A compositionally biased stretch (basic and acidic residues) spans 2468-2477 (EPEHGEDTIA). Ser2492 bears the Phosphoserine mark. In terms of domain architecture, BEACH-type PH spans 2531–2656 (EEGEKIQHMY…IRNKVYQRFL (126 aa)). The interaction with SQSTM1 stretch occupies residues 2586–3526 (MHEPIIPRGA…RGSEDGPRNC (941 aa)). The 294-residue stretch at 2683 to 2976 (GLLSTLVGEK…QLFKKPHPPK (294 aa)) folds into the BEACH domain. The tract at residues 2981–3526 (RLNGDNAGIS…RGSEDGPRNC (546 aa)) is interaction with ATG5. WD repeat units lie at residues 3077–3115 (SEWG…EKAK), 3125–3164 (GHTD…FLTQ), 3167–3206 (GHRA…VSVN), and 3210–3254 (GRSQ…VPET). Residues 3272–3335 (AQIGQEAQDE…SGSDDSRRWS (64 aa)) are disordered. Residues 3278–3290 (AQDEDSSDSEADE) are compositionally biased toward acidic residues. Positions 3313–3363 (AASCRATAAWCTDSGSDDSRRWSDQLSLDEKDGFIFVNYSEGQTRAHLQGP) are interaction with GABARAP. Residues Ser3335 and Ser3339 each carry the phosphoserine modification. The LC3-interacting region (LIR) motif lies at 3346–3349 (FIFV). Residues 3408-3447 (AHPAEVTALGISKDHSRILVGDSRGRVFSWSVSDQPGRSA) form a WD 5 repeat. The segment at 3454–3514 (DEGGDSCSGC…VCQNCYYNLQ (61 aa)) adopts an FYVE-type zinc-finger fold. Residues Cys3460, Cys3463, Cys3476, Cys3479, Cys3484, Cys3487, Cys3506, and Cys3509 each contribute to the Zn(2+) site.

Directly interacts with ATG5 and associates with the ATG12-ATG5-ATG16L complex. Interacts with p62/SQSTM1; this interaction is required to recruit WDFY3 to cytoplasmic bodies and to PML bodies. Directly interacts with GABARAP, GABARAPL1 and GABARAPL2; the interaction with GABARAP is required for WDFY3 recruitment to MAP1LC3B-positive p62/SQSTM1 bodies. Weakly interacts with MAP1LC3C; this interaction is direct. Does not interact with MAP1LC3A, nor MAP1LC3B. Interacts with TRAF6. As to expression, expressed in osteoclast and their mononuclear precursors (at protein level).

It is found in the nucleus membrane. It localises to the cytoplasm. The protein localises to the cytosol. The protein resides in the nucleus. Its subcellular location is the PML body. It is found in the membrane. It localises to the perikaryon. The protein localises to the cell projection. The protein resides in the axon. Required for selective macroautophagy (aggrephagy). Acts as an adapter protein by linking specific proteins destined for degradation to the core autophagic machinery members, such as the ATG5-ATG12-ATG16L E3-like ligase, SQSTM1 and LC3. Along with p62/SQSTM1, involved in the formation and autophagic degradation of cytoplasmic ubiquitin-containing inclusions (p62 bodies, ALIS/aggresome-like induced structures). Along with SQSTM1, required to recruit ubiquitinated proteins to PML bodies in the nucleus. Important for normal brain development. Essential for the formation of axonal tracts throughout the brain and spinal cord, including the formation of the major forebrain commissures. Involved in the ability of neural cells to respond to guidance cues. Required for cortical neurons to respond to the trophic effects of netrin-1/NTN1. Regulates Wnt signaling through the removal of DVL3 aggregates, likely in an autophagy-dependent manner. This process may be important for the determination of brain size during embryonic development. May regulate osteoclastogenesis by acting on the TNFSF11/RANKL - TRAF6 pathway. After cytokinetic abscission, involved in midbody remnant degradation. In vitro strongly binds to phosphatidylinositol 3-phosphate (PtdIns3P). The polypeptide is WD repeat and FYVE domain-containing protein 3 (WDFY3) (Homo sapiens (Human)).